A 232-amino-acid polypeptide reads, in one-letter code: tRNA-uridine aminocarboxypropyltransferase (232 aa).

Positions 31, 34, 41, and 43 each coordinate Zn(2+). The DXTW signature appears at Asp137–Trp140.

The protein belongs to the TDD superfamily. DTWD2 family. TapT subfamily. Monomer in solution.

The catalysed reaction is a uridine in tRNA + S-adenosyl-L-methionine = a 3-[(3S)-3-amino-3-carboxypropyl]uridine in tRNA + S-methyl-5'-thioadenosine + H(+). The enzyme catalyses uridine(47) in tRNA(Phe) + S-adenosyl-L-methionine = 3-[(3S)-3-amino-3-carboxypropyl]uridine(47) in tRNA(Phe) + S-methyl-5'-thioadenosine + H(+). With respect to regulation, the degree of the acp3U modification at U47 is dependent on the presence of the m7G modification at the preceding nucleotide G46. It also depends on medium conditions. Functionally, catalyzes the formation of 3-(3-amino-3-carboxypropyl)uridine (acp3U) at position 47 of tRNAs. Acp3U47 confers thermal stability on tRNA. In Escherichia coli (strain K12), this protein is tRNA-uridine aminocarboxypropyltransferase.